We begin with the raw amino-acid sequence, 1099 residues long: Protein transport protein Sec24A (1099 aa).

Disordered stretches follow at residues 1–36 (MSQPGIPASGGSSTGLQAQNGAASASGSPYTNGPVQ), 65–139 (KTLN…LPGA), and 279–317 (SQPTTKNPTMSRSVGYSYPSLPPGYQNTAPPSTTGAGLP). 5 stretches are compositionally biased toward polar residues: residues 10–20 (GGSSTGLQAQN), 68–90 (NPVSGQSNSGGSQTVSPLSNYQG), 108–126 (SLHSGPSPQMPLPTSQNPA), 279–292 (SQPTTKNPTMSRSV), and 303–317 (YQNTAPPSTTGAGLP). The Zn(2+) site is built by Cys437, Cys440, Cys458, and Cys461. Residues 437–461 (CRSCRTYINPFVSFLDQRRWKCNLC) form a zinc finger-like region. Residues 972 to 1044 (PQPPILQLSV…TPESARTIAF (73 aa)) form a Gelsolin-like repeat.

This sequence belongs to the SEC23/SEC24 family. SEC24 subfamily. As to quaternary structure, COPII is composed of at least five proteins: the Sec23/24 complex, the Sec13/31 complex and Sar1. Interacts with TMED2. Interacts (as part of the Sec23/24 complex) with SEC22B; recruits SEC22B into COPII-coated vesicles for its transport from the endoplasmic reticulum to the Golgi. Interacts with STING1; promoting STING1 translocation to COPII vesicles in a STEEP1-dependent manner. Interacts with TMEM39A. Interacts with SACM1L; this interaction is reduced in the absence of TMEM39A. Interacts with kinase FAM20C; transport of FAM20C from the endoplasmic reticulum to the Golgi is likely to be mediated by COPII vesicles.

Its subcellular location is the cytoplasmic vesicle. The protein resides in the COPII-coated vesicle membrane. It is found in the endoplasmic reticulum membrane. The protein localises to the cytoplasm. It localises to the cytosol. Its function is as follows. Component of the coat protein complex II (COPII) which promotes the formation of transport vesicles from the endoplasmic reticulum (ER). The coat has two main functions, the physical deformation of the endoplasmic reticulum membrane into vesicles and the selection of cargo molecules for their transport to the Golgi complex. Plays a central role in cargo selection within the COPII complex and together with SEC24B may have a different specificity compared to SEC24C and SEC24D. May package preferentially cargos with cytoplasmic DxE or LxxLE motifs and may also recognize conformational epitopes. The chain is Protein transport protein Sec24A from Bos taurus (Bovine).